A 383-amino-acid chain; its full sequence is tRNA-specific 2-thiouridylase MnmA (383 aa).

ATP is bound by residues 31–38 and L57; that span reads GLSGGVDS. C118 acts as the Nucleophile in catalysis. Residues C118 and C217 are joined by a disulfide bond. G143 serves as a coordination point for ATP. The interaction with tRNA stretch occupies residues 167–169; it reads KDQ. C217 (cysteine persulfide intermediate) is an active-site residue. The segment at 322–323 is interaction with tRNA; it reads RY.

This sequence belongs to the MnmA/TRMU family.

Its subcellular location is the cytoplasm. The enzyme catalyses S-sulfanyl-L-cysteinyl-[protein] + uridine(34) in tRNA + AH2 + ATP = 2-thiouridine(34) in tRNA + L-cysteinyl-[protein] + A + AMP + diphosphate + H(+). Catalyzes the 2-thiolation of uridine at the wobble position (U34) of tRNA, leading to the formation of s(2)U34. The protein is tRNA-specific 2-thiouridylase MnmA of Synechococcus sp. (strain RCC307).